A 533-amino-acid polypeptide reads, in one-letter code: MTKKRIAVIGGGVSGLSSIKCCVEEGLEPVCFERTDDIGGLWRFQENPEEGRASIYKSVIINTSKEMMCFSDYPIPDHYPNFMHNAQVLEYFRMYAKEFDLLKYIRFKTTVCSVKKQPDFATSGQWEVVTESEGKKEMNVFDGVMVCTGHHTNAHLPLESFPGIEKFKGQYFHSRDYKNPEGFTGKRVIIIGIGNSGGDLAVEISQTAKQVFLSTRRGAWILNRVGDYGYPADVLFSSRLTHFIWKICGQSLANKYLEKKINQRFDHEMFGLKPKHRALSQHPTLNDDLPNRIISGLVKVKGNVKEFTETAAIFEDGSREDDIDAVIFATGYSFDFPFLEDSVKVVKNKISLYKKVFPPNLERPTLAIIGLIQPLGAIMPISELQGRWATQVFKGLKTLPSQSEMMAEISKAQEEIDKRYVESQRHTIQGDYIDTMEELADLVGVRPNLLSLAFTDPKLALHLLLGPCTPIHYRVQGPGKWDGARKAILTTDDRIRKPLMTRVVERSSSMTSTMTIGKFMLALAFFAIIIAYF.

Arg5 carries the post-translational modification Dimethylated arginine. Residues 10–14 (GGGVS), Glu33, and 41–42 (LW) each bind FAD. Ser54 carries the phosphoserine modification. The residue at position 56 (Tyr56) is a Phosphotyrosine. Phosphoserine is present on Ser58. Position 62-63 (62-63 (NT)) interacts with FAD. An NADP(+)-binding site is contributed by 196-199 (SGGD). Phosphoserine is present on Ser280. Phosphothreonine is present on Thr284. Ser401 is subject to Phosphoserine. Residues 513–533 (TMTIGKFMLALAFFAIIIAYF) traverse the membrane as a helical segment.

The protein belongs to the FMO family. Requires FAD as cofactor. In terms of tissue distribution, expressed in fetal and adult liver.

The protein resides in the microsome membrane. It localises to the endoplasmic reticulum membrane. It carries out the reaction N,N-dimethylaniline + NADPH + O2 + H(+) = N,N-dimethylaniline N-oxide + NADP(+) + H2O. It catalyses the reaction NADPH + O2 + H(+) = H2O2 + NADP(+). The enzyme catalyses heptan-2-one + NADPH + O2 + H(+) = pentyl acetate + NADP(+) + H2O. The catalysed reaction is octan-3-one + NADPH + O2 + H(+) = pentyl propanoate + NADP(+) + H2O. It carries out the reaction octan-3-one + NADPH + O2 + H(+) = ethyl hexanoate + NADP(+) + H2O. It catalyses the reaction hexan-3-one + NADPH + O2 + H(+) = ethyl butanoate + NADP(+) + H2O. The enzyme catalyses hexan-3-one + NADPH + O2 + H(+) = propyl propanoate + NADP(+) + H2O. The catalysed reaction is heptan-4-one + NADPH + O2 + H(+) = propyl butanoate + NADP(+) + H2O. It carries out the reaction (2E)-geranial + NADPH + O2 + H(+) = (1E)-2,6-dimethylhepta-1,5-dien-1-yl formate + NADP(+) + H2O. It catalyses the reaction sulcatone + NADPH + O2 + H(+) = 4-methylpent-3-en-1-yl acetate + NADP(+) + H2O. Acts as a Baeyer-Villiger monooxygenase on a broad range of substrates. Catalyzes the insertion of an oxygen atom into a carbon-carbon bond adjacent to a carbonyl, which converts ketones to esters. Active on diverse carbonyl compounds, whereas soft nucleophiles are mostly non- or poorly reactive. In contrast with other forms of FMO it is non- or poorly active on 'classical' substrates such as drugs, pesticides, and dietary components containing soft nucleophilic heteroatoms. Able to oxidize drug molecules bearing a carbonyl group on an aliphatic chain, such as nabumetone and pentoxifylline. Also, in the absence of substrates, shows slow but yet significant NADPH oxidase activity. Acts as a positive modulator of cholesterol biosynthesis as well as glucose homeostasis, promoting metabolic aging via pleiotropic effects. This Homo sapiens (Human) protein is Flavin-containing monooxygenase 5.